A 904-amino-acid polypeptide reads, in one-letter code: NADH-quinone oxidoreductase subunit G (904 aa).

The 2Fe-2S ferredoxin-type domain occupies Met1–Glu83. [2Fe-2S] cluster-binding residues include Cys34, Cys45, Cys48, and Cys67. In terms of domain architecture, 4Fe-4S His(Cys)3-ligated-type spans Glu83–Gly122. 12 residues coordinate [4Fe-4S] cluster: His99, Cys103, Cys106, Cys112, Cys151, Cys154, Cys157, Cys201, Cys228, Cys231, Cys235, and Cys263. Residues Met221–Asp277 enclose the 4Fe-4S Mo/W bis-MGD-type domain.

This sequence belongs to the complex I 75 kDa subunit family. Composed of 13 different subunits. Subunits NuoCD, E, F, and G constitute the peripheral sector of the complex. It depends on [2Fe-2S] cluster as a cofactor. [4Fe-4S] cluster serves as cofactor.

The catalysed reaction is a quinone + NADH + 5 H(+)(in) = a quinol + NAD(+) + 4 H(+)(out). Its function is as follows. NDH-1 shuttles electrons from NADH, via FMN and iron-sulfur (Fe-S) centers, to quinones in the respiratory chain. The immediate electron acceptor for the enzyme in this species is believed to be ubiquinone. Couples the redox reaction to proton translocation (for every two electrons transferred, four hydrogen ions are translocated across the cytoplasmic membrane), and thus conserves the redox energy in a proton gradient. Required for plants roots colonization. The polypeptide is NADH-quinone oxidoreductase subunit G (nuoG) (Pseudomonas fluorescens).